The following is a 1444-amino-acid chain: Rho GTPase-activating protein 31 (1444 aa).

In terms of domain architecture, Rho-GAP spans 21–216; sequence CDLTEYLESS…FILNHVDQIF (196 aa). A Phosphoserine modification is found at serine 272. Threonine 286 carries the post-translational modification Phosphothreonine. Residues serine 346, serine 349, and serine 387 each carry the phosphoserine modification. Positions 398-427 are disordered; it reads WGQEGMPPGAEGGFDVSSDRSHLQGAQARP. Phosphoserine is present on serine 476. The disordered stretch occupies residues 504–631; that stretch reads TNSTPCRTPP…ESSTLQESPR (128 aa). Over residues 515 to 534 the composition is skewed to low complexity; it reads ELQSLSSLEEFSFHGSESGG. The segment covering 600–619 has biased composition (basic and acidic residues); sequence NELEKRPNPEKVVEEGREAG. Threonine 679 bears the Phosphothreonine mark. Disordered stretches follow at residues 688 to 893 and 906 to 1108; these read SSLG…EDDT and EPWE…SSLN. Phosphoserine occurs at positions 701 and 712. The span at 722-734 shows a compositional bias: polar residues; that stretch reads PANQSTQGASTAA. A compositionally biased stretch (basic and acidic residues) spans 735-745; the sequence is SREKPEPEQGL. Over residues 777–790 the composition is skewed to pro residues; the sequence is LSPPLPPAPPPPTP. Phosphoserine is present on serine 778. Threonine 789 is subject to Phosphothreonine. A compositionally biased stretch (basic and acidic residues) spans 803–817; the sequence is GPEREDSSRKLRTDL. Residues 822–834 show a composition bias toward polar residues; that stretch reads LKSQDSPEISSLC. Residues 839 to 848 are compositionally biased toward basic and acidic residues; the sequence is ATPRHSDKQN. Positions 960–977 are enriched in polar residues; it reads TVKSQWTLEVPSSSSCAN. Residue serine 974 is modified to Phosphoserine. Residues 992-1008 show a composition bias toward basic and acidic residues; the sequence is PRREITGWDEKALRSFR. The segment covering 1028 to 1038 has biased composition (polar residues); the sequence is VQPNPAETSPI. The segment covering 1064-1075 has biased composition (low complexity); that stretch reads GPESSKESSPSV. A phosphoserine mark is found at serine 1105, serine 1106, and serine 1178. Polar residues-rich tracts occupy residues 1211 to 1224 and 1234 to 1245; these read QIPQ…SGEN and EGPSSTSGTTQK. The interval 1211–1346 is disordered; the sequence is QIPQPLPSQS…HRSRPGRPQS (136 aa). Basic and acidic residues predominate over residues 1246–1265; sequence PAKDDSPSSLESSKEEKPKQ. 2 stretches are compositionally biased toward polar residues: residues 1292–1303 and 1314–1323; these read PGSSNLLSTQDA and TEPSGDNLLS.

Interacts with ITSN1, which inhibits GAP activity. Interacts with PARVA. Interacts with GTP-loaded RHOU. Phosphorylation on Thr-789 reduces GAP activity.

The protein resides in the cell projection. Its subcellular location is the lamellipodium. It localises to the cell junction. The protein localises to the focal adhesion. In terms of biological role, functions as a GTPase-activating protein (GAP) for RAC1 and CDC42. Required for cell spreading, polarized lamellipodia formation and cell migration. This chain is Rho GTPase-activating protein 31 (ARHGAP31), found in Homo sapiens (Human).